The following is a 545-amino-acid chain: Sphingomyelin phosphodiesterase 5 (545 aa).

A mitochondrion-targeting transit peptide spans 1 to 35 (MSLRESPFPNGFLEGLHAVGWGLIFPCFWFLDRLI). At 36 to 64 (AVCISTTLERMWRLEQECYLHPLKVVFGS) the chain is on the mitochondrial matrix side. Residues 65 to 85 (ILFFILFVISTPFALLGFILW) traverse the membrane as a helical; Signal-anchor for type II membrane protein segment. Residues 86 to 545 (APLQAIRRPF…LSVSLDSEQN (460 aa)) lie on the Mitochondrial intermembrane side of the membrane. Glu258 serves as a coordination point for Mg(2+). The active-site Proton acceptor is the His529.

It belongs to the neutral sphingomyelinase family. Requires Mg(2+) as cofactor. It depends on Mn(2+) as a cofactor.

It localises to the mitochondrion inner membrane. The protein resides in the endoplasmic reticulum membrane. The enzyme catalyses a sphingomyelin + H2O = phosphocholine + an N-acylsphing-4-enine + H(+). The catalysed reaction is N-(hexadecanoyl)-sphing-4-enine-1-phosphocholine + H2O = N-hexadecanoylsphing-4-enine + phosphocholine + H(+). The protein operates within lipid metabolism; sphingolipid metabolism. With respect to regulation, activated by the phospholipids cardiolipin, phosphatidylserine, and phosphatidylethanolamine. Strongest activation with cardiolipin. Functionally, catalyzes the hydrolysis of membrane sphingomyelin to form phosphorylcholine and ceramide. The polypeptide is Sphingomyelin phosphodiesterase 5 (Danio rerio (Zebrafish)).